Reading from the N-terminus, the 407-residue chain is Arginine biosynthesis bifunctional protein ArgJ (407 aa).

Thr-157, Lys-183, Thr-194, Glu-280, Asn-402, and Thr-407 together coordinate substrate. Residue Thr-194 is the Nucleophile of the active site.

It belongs to the ArgJ family. Heterotetramer of two alpha and two beta chains.

It localises to the cytoplasm. It catalyses the reaction N(2)-acetyl-L-ornithine + L-glutamate = N-acetyl-L-glutamate + L-ornithine. The catalysed reaction is L-glutamate + acetyl-CoA = N-acetyl-L-glutamate + CoA + H(+). It participates in amino-acid biosynthesis; L-arginine biosynthesis; L-ornithine and N-acetyl-L-glutamate from L-glutamate and N(2)-acetyl-L-ornithine (cyclic): step 1/1. It functions in the pathway amino-acid biosynthesis; L-arginine biosynthesis; N(2)-acetyl-L-ornithine from L-glutamate: step 1/4. Its function is as follows. Catalyzes two activities which are involved in the cyclic version of arginine biosynthesis: the synthesis of N-acetylglutamate from glutamate and acetyl-CoA as the acetyl donor, and of ornithine by transacetylation between N(2)-acetylornithine and glutamate. The protein is Arginine biosynthesis bifunctional protein ArgJ of Bacillus anthracis.